The chain runs to 449 residues: Signal recognition particle protein (449 aa).

Residues 109–116 (GLQGGGKT), 191–195 (DTAGR), and 249–252 (SRID) each bind GTP.

The protein belongs to the GTP-binding SRP family. SRP54 subfamily. As to quaternary structure, part of the signal recognition particle protein translocation system, which is composed of SRP and FtsY. SRP is a ribonucleoprotein composed of Ffh and a 4.5S RNA molecule.

The protein localises to the cytoplasm. The catalysed reaction is GTP + H2O = GDP + phosphate + H(+). Involved in targeting and insertion of nascent membrane proteins into the cytoplasmic membrane. Binds to the hydrophobic signal sequence of the ribosome-nascent chain (RNC) as it emerges from the ribosomes. The SRP-RNC complex is then targeted to the cytoplasmic membrane where it interacts with the SRP receptor FtsY. Interaction with FtsY leads to the transfer of the RNC complex to the Sec translocase for insertion into the membrane, the hydrolysis of GTP by both Ffh and FtsY, and the dissociation of the SRP-FtsY complex into the individual components. The protein is Signal recognition particle protein of Rickettsia prowazekii (strain Madrid E).